A 139-amino-acid polypeptide reads, in one-letter code: MKKEKKTPTPLPSHHVLFAEPGFFLCNFFFVLLKHTQINPFFYFLFILLFIIYIAIIYFVFIRISHFSFSLCRQCNSLGRMIFMCAYLPAASSRSVANPALPPQKKKKKKKKGTLRTGEVEEQAKGNISFDLCGKQNFQ.

2 consecutive transmembrane segments (helical) span residues 13-33 (SHHVLFAEPGFFLCNFFFVLL) and 42-62 (FYFLFILLFIIYIAIIYFVFI). The disordered stretch occupies residues 94-121 (RSVANPALPPQKKKKKKKKGTLRTGEVE). Residues 104–114 (QKKKKKKKKGT) show a composition bias toward basic residues.

It is found in the membrane. Its function is as follows. May be involved in telomere capping. In Saccharomyces cerevisiae (strain ATCC 204508 / S288c) (Baker's yeast), this protein is Maintenance of telomere capping protein 7 (MTC7).